Here is a 310-residue protein sequence, read N- to C-terminus: Methionyl-tRNA formyltransferase (310 aa).

Residue 110–113 (SLLP) participates in (6S)-5,6,7,8-tetrahydrofolate binding.

It belongs to the Fmt family.

The catalysed reaction is L-methionyl-tRNA(fMet) + (6R)-10-formyltetrahydrofolate = N-formyl-L-methionyl-tRNA(fMet) + (6S)-5,6,7,8-tetrahydrofolate + H(+). Its function is as follows. Attaches a formyl group to the free amino group of methionyl-tRNA(fMet). The formyl group appears to play a dual role in the initiator identity of N-formylmethionyl-tRNA by promoting its recognition by IF2 and preventing the misappropriation of this tRNA by the elongation apparatus. The sequence is that of Methionyl-tRNA formyltransferase from Streptomyces coelicolor (strain ATCC BAA-471 / A3(2) / M145).